A 172-amino-acid polypeptide reads, in one-letter code: RNA pyrophosphohydrolase (172 aa).

A Nudix hydrolase domain is found at 6-149; sequence GFRANVGIII…KRDVYRKVMK (144 aa). The short motif at 38-59 is the Nudix box element; it reads GGVDEGETPEEAMFRELYEEVG.

It belongs to the Nudix hydrolase family. RppH subfamily. A divalent metal cation is required as a cofactor.

Accelerates the degradation of transcripts by removing pyrophosphate from the 5'-end of triphosphorylated RNA, leading to a more labile monophosphorylated state that can stimulate subsequent ribonuclease cleavage. This Shewanella sediminis (strain HAW-EB3) protein is RNA pyrophosphohydrolase.